The following is a 328-amino-acid chain: uncharacterized protein (328 aa).

The tract at residues 1-22 is disordered; it reads MPVKPNQPRPSTKQDPSSGASR. Polar residues predominate over residues 9-21; that stretch reads RPSTKQDPSSGAS. The next 6 membrane-spanning stretches (helical) occupy residues 66–86, 126–146, 176–196, 221–241, 255–275, and 290–310; these read FSFL…GFVL, TVGL…IGNL, FLSL…TSVA, LIAL…ILWV, GTLM…VALP, and IGLM…AAWI.

To E.coli YhjD.

It is found in the cell inner membrane. This is an uncharacterized protein from Dickeya dadantii (strain 3937) (Erwinia chrysanthemi (strain 3937)).